A 360-amino-acid polypeptide reads, in one-letter code: UPF0283 membrane protein Oant_2119 (360 aa).

Positions Met1–Arg30 are disordered. Transmembrane regions (helical) follow at residues Ile77 to Leu97 and Leu108 to Val128.

Belongs to the UPF0283 family.

The protein resides in the cell inner membrane. This Brucella anthropi (strain ATCC 49188 / DSM 6882 / CCUG 24695 / JCM 21032 / LMG 3331 / NBRC 15819 / NCTC 12168 / Alc 37) (Ochrobactrum anthropi) protein is UPF0283 membrane protein Oant_2119.